The following is a 258-amino-acid chain: Countin-1 (258 aa).

Residues 1-21 form the signal peptide; sequence MNKLFSLILALFLVNSAVVSS. Residues 22–106 form the Saposin B-type domain; it reads LDSCSICVDF…EKISVCKTND (85 aa). Disulfide bonds link cysteine 25–cysteine 102, cysteine 28–cysteine 96, and cysteine 56–cysteine 69. Residues asparagine 121 and asparagine 215 are each glycosylated (N-linked (GlcNAc...) asparagine). Low complexity predominate over residues 233–248; the sequence is AGSFSGSSQSTQTGAA. The interval 233–258 is disordered; that stretch reads AGSFSGSSQSTQTGAASGSGSGFALF. Positions 249-258 are enriched in gly residues; that stretch reads SGSGSGFALF.

Belongs to the countin family. As to quaternary structure, component of the counting factor (CF) complex, which includes cf60, cf50, cf45-1 and ctnA.

Its subcellular location is the secreted. Cell-counting factor that limits the maximum size of the multicellular structure. May down-regulate the expression of gp24, which mediates cell adhesion. This Dictyostelium discoideum (Social amoeba) protein is Countin-1 (ctnA).